The primary structure comprises 698 residues: Ubiquitin-like modifier-activating enzyme ATG7 (698 aa).

The FAP motif signature appears at 11–13; that stretch reads FAP. Lys-41 participates in a covalent cross-link: Glycyl lysine isopeptide (Lys-Gly) (interchain with G-Cter in ubiquitin). The active-site Glycyl thioester intermediate is Cys-567. Ser-693 carries the phosphoserine modification.

The protein belongs to the ATG7 family. In terms of assembly, homodimer. Interacts with ATG3; this interaction is essential for the transfer of ATG8-like proteins's thioester from ATG7 to ATG3 and plays a role in the conjugation of ATG12 to ATG5. Interacts with ATG12. Forms intermediate conjugates with GABARAPL1. Forms intermediate conjugates with ATG8-like proteins such as GABARAP, GABARAPL2 or MAP1LC3A. Interacts with EP300 acetyltransferase. Interacts with FOXO1. In terms of processing, acetylated by EP300. Post-translationally, polyubiquitinated on Lys-41 via 'Lys-63'-linked ubiquitin by TRIM32; this modification positiely regulates ATG8 and ATG12 activating enzyme activity leading to initiation of autophagy under metabolic stress. Widely expressed.

Its subcellular location is the cytoplasm. It is found in the preautophagosomal structure. E1-like activating enzyme involved in the 2 ubiquitin-like systems required for cytoplasm to vacuole transport (Cvt) and autophagy. Activates ATG12 for its conjugation with ATG5 as well as the ATG8 family proteins for their conjugation with phosphatidylethanolamine. Both systems are needed for the ATG8 association to Cvt vesicles and autophagosomes membranes. Required for autophagic death induced by caspase-8 inhibition. Facilitates LC3-I lipidation with phosphatidylethanolamine to form LC3-II which is found on autophagosomal membranes. Required for mitophagy which contributes to regulate mitochondrial quantity and quality by eliminating the mitochondria to a basal level to fulfill cellular energy requirements and preventing excess ROS production. Modulates p53/TP53 activity to regulate cell cycle and survival during metabolic stress. Also plays a key role in the maintenance of axonal homeostasis, the prevention of axonal degeneration, the maintenance of hematopoietic stem cells, the formation of Paneth cell granules, as well as in adipose differentiation. Plays a role in regulating the liver clock and glucose metabolism by mediating the autophagic degradation of CRY1 (clock repressor) in a time-dependent manner. This Rattus norvegicus (Rat) protein is Ubiquitin-like modifier-activating enzyme ATG7.